The chain runs to 139 residues: Peptide methionine sulfoxide reductase MsrB (139 aa).

Residues 14–137 (DEEWRRELTP…NSISLDFQPE (124 aa)) form the MsrB domain. 4 residues coordinate Zn(2+): cysteine 53, cysteine 56, cysteine 102, and cysteine 105. Catalysis depends on cysteine 126, which acts as the Nucleophile.

Belongs to the MsrB Met sulfoxide reductase family. It depends on Zn(2+) as a cofactor.

It carries out the reaction L-methionyl-[protein] + [thioredoxin]-disulfide + H2O = L-methionyl-(R)-S-oxide-[protein] + [thioredoxin]-dithiol. The sequence is that of Peptide methionine sulfoxide reductase MsrB from Leifsonia xyli subsp. xyli (strain CTCB07).